A 431-amino-acid polypeptide reads, in one-letter code: Glucose-1-phosphate adenylyltransferase (431 aa).

Position 39 (Lys-39) interacts with beta-D-fructose 1,6-bisphosphate. The AMP site is built by Arg-40, His-46, and Arg-52. Tyr-114 provides a ligand contact to alpha-D-glucose 1-phosphate. Residue Arg-130 coordinates AMP. Alpha-D-glucose 1-phosphate-binding positions include Gly-179, 194–195, and Ser-212; that span reads EK. Glu-370 and Arg-386 together coordinate AMP. Beta-D-fructose 1,6-bisphosphate is bound by residues 419–423 and 429–431; these read REMLR and QER.

This sequence belongs to the bacterial/plant glucose-1-phosphate adenylyltransferase family. In terms of assembly, homotetramer.

It catalyses the reaction alpha-D-glucose 1-phosphate + ATP + H(+) = ADP-alpha-D-glucose + diphosphate. It participates in glycan biosynthesis; glycogen biosynthesis. Allosterically activated by fructose-1,6-bisphosphate (F16BP) and inhibited by AMP. In terms of biological role, involved in the biosynthesis of ADP-glucose, a building block required for the elongation reactions to produce glycogen. Catalyzes the reaction between ATP and alpha-D-glucose 1-phosphate (G1P) to produce pyrophosphate and ADP-Glc. This chain is Glucose-1-phosphate adenylyltransferase, found in Escherichia coli O7:K1 (strain IAI39 / ExPEC).